Consider the following 292-residue polypeptide: Homoserine kinase (292 aa).

Position 81-91 (81-91 (RPRSGLGSSGA)) interacts with ATP.

Belongs to the GHMP kinase family. Homoserine kinase subfamily.

It localises to the cytoplasm. The catalysed reaction is L-homoserine + ATP = O-phospho-L-homoserine + ADP + H(+). It functions in the pathway amino-acid biosynthesis; L-threonine biosynthesis; L-threonine from L-aspartate: step 4/5. In terms of biological role, catalyzes the ATP-dependent phosphorylation of L-homoserine to L-homoserine phosphate. The chain is Homoserine kinase from Thermococcus gammatolerans (strain DSM 15229 / JCM 11827 / EJ3).